The sequence spans 234 residues: UDP-2,3-diacylglucosamine hydrolase (234 aa).

Mn(2+) is bound by residues D9, H11, D42, N80, and H115. N80–R81 provides a ligand contact to substrate. Substrate contacts are provided by D123, S161, K165, K168, and H196. Positions 196 and 198 each coordinate Mn(2+).

This sequence belongs to the LpxH family. Mn(2+) serves as cofactor.

The protein resides in the cell inner membrane. It carries out the reaction UDP-2-N,3-O-bis[(3R)-3-hydroxytetradecanoyl]-alpha-D-glucosamine + H2O = 2-N,3-O-bis[(3R)-3-hydroxytetradecanoyl]-alpha-D-glucosaminyl 1-phosphate + UMP + 2 H(+). It participates in glycolipid biosynthesis; lipid IV(A) biosynthesis; lipid IV(A) from (3R)-3-hydroxytetradecanoyl-[acyl-carrier-protein] and UDP-N-acetyl-alpha-D-glucosamine: step 4/6. Functionally, hydrolyzes the pyrophosphate bond of UDP-2,3-diacylglucosamine to yield 2,3-diacylglucosamine 1-phosphate (lipid X) and UMP by catalyzing the attack of water at the alpha-P atom. Involved in the biosynthesis of lipid A, a phosphorylated glycolipid that anchors the lipopolysaccharide to the outer membrane of the cell. This is UDP-2,3-diacylglucosamine hydrolase from Haemophilus ducreyi (strain 35000HP / ATCC 700724).